Here is a 317-residue protein sequence, read N- to C-terminus: Transaldolase (317 aa).

Lysine 132 serves as the catalytic Schiff-base intermediate with substrate.

Belongs to the transaldolase family. Type 1 subfamily. Homodimer.

It localises to the cytoplasm. The catalysed reaction is D-sedoheptulose 7-phosphate + D-glyceraldehyde 3-phosphate = D-erythrose 4-phosphate + beta-D-fructose 6-phosphate. It participates in carbohydrate degradation; pentose phosphate pathway; D-glyceraldehyde 3-phosphate and beta-D-fructose 6-phosphate from D-ribose 5-phosphate and D-xylulose 5-phosphate (non-oxidative stage): step 2/3. Its function is as follows. Transaldolase is important for the balance of metabolites in the pentose-phosphate pathway. The chain is Transaldolase from Haemophilus influenzae (strain PittEE).